The following is a 339-amino-acid chain: Uroporphyrinogen decarboxylase (339 aa).

Substrate is bound by residues 21 to 25 (RQAGR), Asp-71, Tyr-147, Ser-202, and His-315.

Belongs to the uroporphyrinogen decarboxylase family. In terms of assembly, homodimer.

It localises to the cytoplasm. The enzyme catalyses uroporphyrinogen III + 4 H(+) = coproporphyrinogen III + 4 CO2. The protein operates within porphyrin-containing compound metabolism; protoporphyrin-IX biosynthesis; coproporphyrinogen-III from 5-aminolevulinate: step 4/4. Functionally, catalyzes the decarboxylation of four acetate groups of uroporphyrinogen-III to yield coproporphyrinogen-III. The sequence is that of Uroporphyrinogen decarboxylase from Helicobacter acinonychis (strain Sheeba).